An 87-amino-acid polypeptide reads, in one-letter code: Large ribosomal subunit protein bL27 (87 aa).

Residues 1 to 21 form a disordered region; that stretch reads MAHKKAGGSSRNGRDSESKRL.

It belongs to the bacterial ribosomal protein bL27 family.

This chain is Large ribosomal subunit protein bL27, found in Paraburkholderia phytofirmans (strain DSM 17436 / LMG 22146 / PsJN) (Burkholderia phytofirmans).